Here is a 269-residue protein sequence, read N- to C-terminus: Putative imidazole glycerol phosphate synthase subunit hisF2 (269 aa).

Residue aspartate 133 is part of the active site.

It belongs to the HisA/HisF family. As to quaternary structure, heterodimer of HisH and HisF.

The protein resides in the cytoplasm. It catalyses the reaction 5-[(5-phospho-1-deoxy-D-ribulos-1-ylimino)methylamino]-1-(5-phospho-beta-D-ribosyl)imidazole-4-carboxamide + L-glutamine = D-erythro-1-(imidazol-4-yl)glycerol 3-phosphate + 5-amino-1-(5-phospho-beta-D-ribosyl)imidazole-4-carboxamide + L-glutamate + H(+). It functions in the pathway amino-acid biosynthesis; L-histidine biosynthesis; L-histidine from 5-phospho-alpha-D-ribose 1-diphosphate: step 5/9. Its function is as follows. IGPS catalyzes the conversion of PRFAR and glutamine to IGP, AICAR and glutamate. The HisF subunit catalyzes the cyclization activity that produces IGP and AICAR from PRFAR using the ammonia provided by the HisH subunit. The protein is Putative imidazole glycerol phosphate synthase subunit hisF2 (hisF2) of Parasynechococcus marenigrum (strain WH8102).